A 320-amino-acid chain; its full sequence is Cytochrome f (320 aa).

Residues 1 to 35 (MQTKNTFSWIKKEIIRSISVSLMIYIIARTSISNA) form the signal peptide. The heme site is built by Tyr36, Cys56, Cys59, and His60. A helical transmembrane segment spans residues 286–306 (VQGLLFFLASVILAQIFLVLK).

This sequence belongs to the cytochrome f family. The 4 large subunits of the cytochrome b6-f complex are cytochrome b6, subunit IV (17 kDa polypeptide, petD), cytochrome f and the Rieske protein, while the 4 small subunits are PetG, PetL, PetM and PetN. The complex functions as a dimer. Requires heme as cofactor.

The protein localises to the plastid. The protein resides in the chloroplast thylakoid membrane. Its function is as follows. Component of the cytochrome b6-f complex, which mediates electron transfer between photosystem II (PSII) and photosystem I (PSI), cyclic electron flow around PSI, and state transitions. The protein is Cytochrome f of Eucalyptus globulus subsp. globulus (Tasmanian blue gum).